The sequence spans 348 residues: Dihydroorotase (348 aa).

Zn(2+)-binding residues include histidine 17 and histidine 19. Residues 19-21 (HLR) and asparagine 45 each bind substrate. Residues lysine 103, histidine 140, and histidine 178 each coordinate Zn(2+). Residue lysine 103 is modified to N6-carboxylysine. Residue histidine 140 coordinates substrate. Leucine 223 contributes to the substrate binding site. Zn(2+) is bound at residue aspartate 251. Residue aspartate 251 is part of the active site. The substrate site is built by histidine 255 and alanine 267.

Belongs to the metallo-dependent hydrolases superfamily. DHOase family. Class II DHOase subfamily. Homodimer. Requires Zn(2+) as cofactor.

The enzyme catalyses (S)-dihydroorotate + H2O = N-carbamoyl-L-aspartate + H(+). It participates in pyrimidine metabolism; UMP biosynthesis via de novo pathway; (S)-dihydroorotate from bicarbonate: step 3/3. Its function is as follows. Catalyzes the reversible cyclization of carbamoyl aspartate to dihydroorotate. The sequence is that of Dihydroorotase from Edwardsiella ictaluri (strain 93-146).